A 146-amino-acid polypeptide reads, in one-letter code: Globin (146 aa).

Position 1 is an N-acetylalanine (Ala-1). One can recognise a Globin domain in the interval 1-146; sequence ALSAAEAEVV…IIDAMKKAGK (146 aa). His-95 contributes to the heme b binding site.

This sequence belongs to the globin family. As to quaternary structure, monomer.

The protein is Globin of Dolabella auricularia (Shoulderblade sea cat).